We begin with the raw amino-acid sequence, 255 residues long: uncharacterized protein (255 aa).

A signal peptide spans methionine 1–glycine 23. Cysteine 24 carries the N-palmitoyl cysteine lipid modification. Cysteine 24 is lipidated: S-diacylglycerol cysteine.

This sequence belongs to the staphylococcal tandem lipoprotein family.

It is found in the cell membrane. This is an uncharacterized protein from Staphylococcus aureus (strain MRSA252).